The following is a 777-amino-acid chain: Phosphate transporter PHO1 homolog 10 (777 aa).

An SPX domain is found at 1–322; that stretch reads MKFGKIFKKQ…SRNASRNYMK (322 aa). Over 1–372 the chain is Cytoplasmic; that stretch reads MKFGKIFKKQ…RPKVKRERHR (372 aa). The chain crosses the membrane as a helical span at residues 373 to 393; sequence VTFFSGFFSGCSIALVIAVVF. Topologically, residues 394-408 are extracellular; sequence KIESRKIMEKNYGTE. The chain crosses the membrane as a helical span at residues 409–429; that stretch reads YMANIIPLYSLFGFIILHMLM. Topologically, residues 430-459 are cytoplasmic; it reads YSANIYFWKRYRVNYTFIFGFKQGTELGDR. A helical transmembrane segment spans residues 460–480; that stretch reads EVFLVSTGLAVLAFVCFLLNL. The Extracellular portion of the chain corresponds to 481–496; sequence QLDMDWRMKHHKTLPE. The chain crosses the membrane as a helical span at residues 497 to 517; it reads VIPLCLATIVLFILFCPFNII. The Cytoplasmic segment spans residues 518–646; the sequence is YRSSRFFFIR…YELKKGRTWM (129 aa). The 195-residue stretch at 581–775 folds into the EXS domain; it reads HSHGVYNAFY…HYYDDDDVDK (195 aa). Residues 647–667 form a helical membrane-spanning segment; the sequence is ILALVSSGVATGMNTFWDIVI. The Extracellular portion of the chain corresponds to 668–691; sequence DWGLLRKHSKNPYLRDKLLVPHKS. Residues 692–712 traverse the membrane as a helical segment; sequence VYFAAMVVNVILRVAWMQLVL. Over 713-777 the chain is Cytoplasmic; that stretch reads EFNLKSLHKI…YDDDDVDKDD (65 aa).

Belongs to the SYG1 (TC 2.A.94) family. In terms of tissue distribution, expressed in root epidermis and cortex, leaf blades and hydathodes, stems and flowers.

It is found in the cell membrane. Functionally, may transport inorganic phosphate (Pi). This Arabidopsis thaliana (Mouse-ear cress) protein is Phosphate transporter PHO1 homolog 10 (PHO1-H10).